A 246-amino-acid polypeptide reads, in one-letter code: 1-(5-phosphoribosyl)-5-[(5-phosphoribosylamino)methylideneamino] imidazole-4-carboxamide isomerase (246 aa).

Residue Asp8 is the Proton acceptor of the active site. Asp129 acts as the Proton donor in catalysis.

The protein belongs to the HisA/HisF family.

The protein localises to the cytoplasm. The enzyme catalyses 1-(5-phospho-beta-D-ribosyl)-5-[(5-phospho-beta-D-ribosylamino)methylideneamino]imidazole-4-carboxamide = 5-[(5-phospho-1-deoxy-D-ribulos-1-ylimino)methylamino]-1-(5-phospho-beta-D-ribosyl)imidazole-4-carboxamide. It participates in amino-acid biosynthesis; L-histidine biosynthesis; L-histidine from 5-phospho-alpha-D-ribose 1-diphosphate: step 4/9. This chain is 1-(5-phosphoribosyl)-5-[(5-phosphoribosylamino)methylideneamino] imidazole-4-carboxamide isomerase, found in Methylocella silvestris (strain DSM 15510 / CIP 108128 / LMG 27833 / NCIMB 13906 / BL2).